A 317-amino-acid chain; its full sequence is Protein phosphatase 1 regulatory subunit 3C (317 aa).

Residues 84-87 carry the PP1-binding motif motif; sequence RVVF. An interaction with EPM2A region spans residues 141-263; that stretch reads PSSDYLSFRD…YRIVHVQWKP (123 aa). The 109-residue stretch at 149–257 folds into the CBM21 domain; sequence RDRFQKNFVC…NNEAQNYRIV (109 aa).

In terms of assembly, interacts with PPP1CC catalytic subunit of PP1 and associates with glycogen. Forms complexes with glycogen phosphorylase, glycogen synthase and phosphorylase kinase which is necessary for its regulation of PP1 activity. Also interacts with EPM2A/laforin. Ubiquitinated by NHLRC1/malin in a EPM2A/laforin-dependent manner.

In terms of biological role, acts as a glycogen-targeting subunit for PP1 and regulates its activity. Activates glycogen synthase, reduces glycogen phosphorylase activity and limits glycogen breakdown. Dramatically increases basal and insulin-stimulated glycogen synthesis upon overexpression in a variety of cell types. This chain is Protein phosphatase 1 regulatory subunit 3C, found in Rattus norvegicus (Rat).